We begin with the raw amino-acid sequence, 698 residues long: MEPYWNETNGHAAHPVKYESEAAVSSFPYCTESSLNFSTSATAYSEDDAEYATGRRNKTSRQDPLSHRIIEKRRRDRMNSCLADLSRLIPPQYQRKGRGRIEKTEIIEMAIRHLKHLQSECQQKESDYRSGYMDCMKEAAKFLYDVHMQDFCHRLLGRLQEHIDEMFKTDCYKSTRSCHMPDNVSASSGSPHQAYHPPLCHLRDMLATSASDVEHSQDHNDVKDLSFRNHLNQLQRSQQAAAAAAVAAAAVAVANGSSPASNAGVDSKVPLTNGGGTGGAPPAADNVPSNSTGSGSAAACAGGNSNSSGSNSSNAASSTICPPAGGSCPAKVTPLAAHQQPHQAPVITSTAPHHHHHHTDSSHHDFESSREPILHTDTSNMHSPPPRDLLLQQHPHLAHSHHTQDSLMSVRMRNYSESSHEIEHNNNYKYKNHIKERFVHELHDEETSSEHCPVAAHLQSDHSHLQALSEHSKDGTEPEIAPIMAKKRKLAEAAANGEIPLEVHTESSNAGASSANRLDKPSPSFNFSDIKDIKAELHNGNSNSSPLLAKLSAVAAAGGQLSTPSSTTAPLPPRHTFTVPIFALHGQGNYYVPLNVDYNALVPFLNGMDLLEKSYTSMPVVHPININVNFMPSSPSASLLAAAAAAAVAVGKQQQQQAVVAAGAGLPLSTNSAAAQAAAVAAAAVAKAKLEQAMNQSW.

The interval 62 to 75 (QDPLSHRIIEKRRR) is basic motif; degenerate. The bHLH domain maps to 62–117 (QDPLSHRIIEKRRRDRMNSCLADLSRLIPPQYQRKGRGRIEKTEIIEMAIRHLKHL). The helix-loop-helix motif stretch occupies residues 76–117 (DRMNSCLADLSRLIPPQYQRKGRGRIEKTEIIEMAIRHLKHL). An Orange domain is found at 128–159 (YRSGYMDCMKEAAKFLYDVHMQDFCHRLLGRL). Disordered stretches follow at residues 257–319 (SSPA…ASST) and 349–369 (STAPHHHHHHTDSSHHDFESS). The segment covering 280-318 (APPAADNVPSNSTGSGSAAACAGGNSNSSGSNSSNAASS) has biased composition (low complexity). A compositionally biased stretch (basic and acidic residues) spans 359-369 (TDSSHHDFESS).

Expressed in adult brain where it is detected in the dorsal lateral neurons, small and large ventral lateral neurons and dorsal neurons 1, 2 and 3 (at protein level). Expressed at constant levels in a 12 hour light / 12 hour day cycle (at protein level). Strongly expressed in pacemaker neurons. In adults, mRNA expression oscillates in a circadian manner with a peak at around 14 hour Zeitgeber time. mRNA levels oscillate in a rhythmic manner in both 12 hour light / 12 hour dark and constant dark conditions with a morning peak around the time of lights-on and an evening peak around the time of lights-off in light/dark conditions. During stage 8 of embryonic development, expressed in the anterior and posterior midgut primordia and expression in the gut continues throughout embryonic development. During germ band retraction, expression is initiated in many tissues in a prominent segmentally repeated pattern. Later, expression is ubiquitous but has higher levels in segmentally repeated clusters of cells. Expression is also found in cells of the amnioserosa, in the head region, in posterior spiracles and in tracheal trees.

It is found in the nucleus. Functionally, plays a role in the regulation of circadian rhythms. Transcriptional repressor which inhibits Clock-mediated transcriptional activation by binding to E boxes in the promoters of Clock target genes and repressing their transcription. E box binding activity is time-dependent with higher binding activity seen in the early morning (zeitgeber time 2) than early evening (zeitgeber time 14) and is dependent on the presence of the circadian protein per. It is likely that per binds to Clock-cycle heterodimers, reducing their affinity for E box binding and allowing cwo to bind instead. Negatively regulates its own expression. The polypeptide is Transcription factor cwo (Drosophila melanogaster (Fruit fly)).